We begin with the raw amino-acid sequence, 317 residues long: Probable cell division protein WhiA (317 aa).

Positions 278-311 form a DNA-binding region, H-T-H motif; sequence SLQGLGELLDPQVGKSGVNHRLRKIGEKADELRQ.

This sequence belongs to the WhiA family.

In terms of biological role, involved in cell division and chromosome segregation. This Lachnospira eligens (strain ATCC 27750 / DSM 3376 / VPI C15-48 / C15-B4) (Eubacterium eligens) protein is Probable cell division protein WhiA.